The primary structure comprises 249 residues: MFNDRPQTDRMFFPPERPEVTSELSNNVVLTTLNDLYNWARLSSVWPLMYGTACCFIEFAGLIGSRFDFDRFGLVPRASPRQADLIITAGTITMKFAPALVTLYQQMPEPKYVIAMGACTITGGMFSTDSPTTVRGVDKLIPVDVYIPGCPPRPEAIFDAIIKLRKKMATEDFRERYDTIAQTHRYYTAAHRMKAVADPLTSEYIRLESRQAAPPALAAAIEMGIPLDLQRTPQLEEQIRDGEHRDARA.

Cys-54, Cys-55, Cys-119, and Cys-150 together coordinate [4Fe-4S] cluster.

It belongs to the complex I 20 kDa subunit family. As to quaternary structure, NDH-1 can be composed of about 15 different subunits; different subcomplexes with different compositions have been identified which probably have different functions. [4Fe-4S] cluster serves as cofactor.

The protein localises to the cell inner membrane. The catalysed reaction is a plastoquinone + NADH + (n+1) H(+)(in) = a plastoquinol + NAD(+) + n H(+)(out). It catalyses the reaction a plastoquinone + NADPH + (n+1) H(+)(in) = a plastoquinol + NADP(+) + n H(+)(out). NDH-1 shuttles electrons from an unknown electron donor, via FMN and iron-sulfur (Fe-S) centers, to quinones in the respiratory and/or the photosynthetic chain. The immediate electron acceptor for the enzyme in this species is believed to be plastoquinone. Couples the redox reaction to proton translocation, and thus conserves the redox energy in a proton gradient. Cyanobacterial NDH-1 also plays a role in inorganic carbon-concentration. The polypeptide is NAD(P)H-quinone oxidoreductase subunit K 2 (Gloeobacter violaceus (strain ATCC 29082 / PCC 7421)).